A 277-amino-acid polypeptide reads, in one-letter code: Diaminopimelate epimerase (277 aa).

Substrate is bound by residues N13, Q46, and N66. C75 acts as the Proton donor in catalysis. Substrate is bound by residues G76–N77, N159, N192, and E210–R211. C219 serves as the catalytic Proton acceptor. G220–T221 contacts substrate.

This sequence belongs to the diaminopimelate epimerase family. In terms of assembly, homodimer.

The protein localises to the cytoplasm. The enzyme catalyses (2S,6S)-2,6-diaminopimelate = meso-2,6-diaminopimelate. It participates in amino-acid biosynthesis; L-lysine biosynthesis via DAP pathway; DL-2,6-diaminopimelate from LL-2,6-diaminopimelate: step 1/1. Catalyzes the stereoinversion of LL-2,6-diaminopimelate (L,L-DAP) to meso-diaminopimelate (meso-DAP), a precursor of L-lysine and an essential component of the bacterial peptidoglycan. This chain is Diaminopimelate epimerase, found in Azoarcus sp. (strain BH72).